Reading from the N-terminus, the 97-residue chain is METNSHYFYVLSCRDGSLYAGYTNNIEKRLKTHNDGKGAKYTRARLPVKLHYAECFSTKREAMQAEYYFKKLSRKNKERYIEEKRREGVDYQPAKEF.

A GIY-YIG domain is found at Asn4–Arg79.

Belongs to the UPF0213 family.

This is UPF0213 protein BLi00048/BL00536 from Bacillus licheniformis (strain ATCC 14580 / DSM 13 / JCM 2505 / CCUG 7422 / NBRC 12200 / NCIMB 9375 / NCTC 10341 / NRRL NRS-1264 / Gibson 46).